The following is a 468-amino-acid chain: Uronate isomerase (468 aa).

This sequence belongs to the metallo-dependent hydrolases superfamily. Uronate isomerase family.

The catalysed reaction is D-glucuronate = D-fructuronate. It carries out the reaction aldehydo-D-galacturonate = keto-D-tagaturonate. The protein operates within carbohydrate metabolism; pentose and glucuronate interconversion. In Brachyspira hyodysenteriae (strain ATCC 49526 / WA1), this protein is Uronate isomerase.